Consider the following 107-residue polypeptide: FK506-binding protein 1 (107 aa).

In terms of domain architecture, PPIase FKBP-type spans 19-107 (GSNVTVHHAG…VFEVELITFK (89 aa)).

Belongs to the FKBP-type PPIase family.

It catalyses the reaction [protein]-peptidylproline (omega=180) = [protein]-peptidylproline (omega=0). With respect to regulation, inhibited by both FK506 and rapamycin. PPIases accelerate the folding of proteins by catalyzing the cis-trans isomerization of proline imidic peptide bonds in oligopeptides. This is FK506-binding protein 1 (fkbp1) from Dictyostelium discoideum (Social amoeba).